Consider the following 172-residue polypeptide: MFDVFTRVVSQADARGEYLSGSQLDALSATVAEGNKRIDSVNRITGNASAIVSNAARALFAEQPQLIQPGGNAYTSRRMAACLRDMEIILRYVTYATFTGDASVLEDRCLNGLRETYVALGVPGASVAAGVQKMKEAALDIVNDPNGITRGDCSAIVAEIAGYFDRAAAAVA.

Residue Asn-72 is modified to N4-methylasparagine. The (2R,3E)-phycocyanobilin site is built by Cys-82 and Cys-153.

The protein belongs to the phycobiliprotein family. In terms of assembly, heterodimer of an alpha and a beta chain, which further assembles into trimers. The trimers assemble into hexamers, although these were not seen in the crystallographic studies. Part of 2 PBS rod complexes, the conventional CpcG-PBS rod and a photosystem I-specific CpcL-PBS rod, both of which include ferredoxin--NADP reductase (petH). Interacts with rod linker CpcC2 via the latter's N-terminal PBS-linker domain. Contains two covalently linked bilin chromophores.

The protein resides in the cellular thylakoid membrane. Its function is as follows. Light-harvesting photosynthetic bile pigment-protein from the phycobiliprotein complex (phycobilisome, PBS). Phycocyanin is the major phycobiliprotein in the PBS rod. This Synechocystis sp. (strain ATCC 27184 / PCC 6803 / Kazusa) protein is C-phycocyanin beta subunit (cpcB).